Reading from the N-terminus, the 79-residue chain is MTKIIYCIYLKKYAEGLKFPCYPGKLGEYIYKNISQEAWNKWQNVQTILINENKLNMLCAKDRSIIEKKMKKFLCLKPL.

The protein belongs to the Fe(2+)-trafficking protein family. Monomer.

In terms of biological role, could be a mediator in iron transactions between iron acquisition and iron-requiring processes, such as synthesis and/or repair of Fe-S clusters in biosynthetic enzymes. The sequence is that of Probable Fe(2+)-trafficking protein from Blochmanniella floridana.